We begin with the raw amino-acid sequence, 282 residues long: MSVYDKHQALSGLTLGKPTPYHDRYDAALLQPVPRSLNRDPLGIHPDSLPFHGADIWTLYELSWLNNRGVPQVAVGEMHLNAESLNLIESKSFKLYLNSFNQTTFDSWESVRATLANDLAHCAQGDVSITLFKLSELEGQPLAGFTGECIDDQDIQIDSYDFNADYLATNEQDAPVVEETLVSHLLKSNCLITHQPDWGSVQIHYRGKRINREALLRYIISFRHHNEFHEQCVERIFNDIMRYYQPEKLSVYARYTRRGGLDINPWRSNTAFNAPNGRLPRQ.

A substrate-binding site is contributed by 88-90 (IES). Residue 90-91 (SK) coordinates NADPH. The Thioimide intermediate role is filled by Cys-190. Residue Asp-197 is the Proton donor of the active site. 229-230 (HE) serves as a coordination point for substrate. 258-259 (RG) serves as a coordination point for NADPH.

This sequence belongs to the GTP cyclohydrolase I family. QueF type 2 subfamily. Homodimer.

It localises to the cytoplasm. The enzyme catalyses 7-aminomethyl-7-carbaguanine + 2 NADP(+) = 7-cyano-7-deazaguanine + 2 NADPH + 3 H(+). The protein operates within tRNA modification; tRNA-queuosine biosynthesis. Catalyzes the NADPH-dependent reduction of 7-cyano-7-deazaguanine (preQ0) to 7-aminomethyl-7-deazaguanine (preQ1). In Pectobacterium carotovorum subsp. carotovorum (strain PC1), this protein is NADPH-dependent 7-cyano-7-deazaguanine reductase.